The sequence spans 292 residues: NAD kinase (292 aa).

Aspartate 73 acts as the Proton acceptor in catalysis. NAD(+) is bound by residues 73-74, 147-148, histidine 158, arginine 175, aspartate 177, 188-193, and glutamine 247; these read DG, NE, and TAYSLS.

This sequence belongs to the NAD kinase family. Requires a divalent metal cation as cofactor.

It localises to the cytoplasm. It catalyses the reaction NAD(+) + ATP = ADP + NADP(+) + H(+). Its function is as follows. Involved in the regulation of the intracellular balance of NAD and NADP, and is a key enzyme in the biosynthesis of NADP. Catalyzes specifically the phosphorylation on 2'-hydroxyl of the adenosine moiety of NAD to yield NADP. In Shigella boydii serotype 18 (strain CDC 3083-94 / BS512), this protein is NAD kinase.